The sequence spans 193 residues: uncharacterized protein (193 aa).

3 disordered regions span residues 1–21 (MPKG…APPL), 53–96 (GAPA…PWPS), and 114–136 (SGPE…ASAS). The segment covering 53–70 (GAPAGGAPAAGGRSLPQG) has biased composition (low complexity). Residues 71 to 95 (PSAPAPPPPPGLGPPSERPCPPPWP) show a composition bias toward pro residues. Low complexity predominate over residues 116–127 (PEAAASPLAPGP).

This is an uncharacterized protein from Bos taurus (Bovine).